The chain runs to 219 residues: Exosomal polycystin-1-interacting protein (219 aa).

The first 19 residues, 1–19 (MAPPSRHCLLLISTLGVFA), serve as a signal peptide directing secretion. Asparagine 29, asparagine 42, asparagine 95, asparagine 188, and asparagine 210 each carry an N-linked (GlcNAc...) asparagine glycan.

Belongs to the EPCIP family. As to quaternary structure, homooligomer. Interacts with PKD1 (via the PKD repeats in the N-terminal extracellular region); the interaction is not dependent on N-glycosylation of either protein. In terms of processing, N-glycosylated. Detected in the kidney and in the endothelium of large blood vessels (at protein level).

It is found in the vesicle. The protein localises to the secreted. Its subcellular location is the extracellular exosome. Functionally, likely to be involved with PKD1 in the detection, sequestration and exocytosis of senescent mitochondria. The sequence is that of Exosomal polycystin-1-interacting protein from Homo sapiens (Human).